The primary structure comprises 218 residues: Acetoacetyl-CoA:acetate/butyrate CoA transferase alpha subunit (218 aa).

Residue 24 to 30 (GGFLNCG) participates in CoA binding.

The protein belongs to the 3-oxoacid CoA-transferase subunit A family. Heterotetramer composed of two alpha subunits (CtfA) and two beta subunits (CtfB).

The catalysed reaction is acetoacetate + butanoyl-CoA = acetoacetyl-CoA + butanoate. It catalyses the reaction acetoacetate + acetyl-CoA = acetoacetyl-CoA + acetate. Its activity is regulated as follows. The acetate and butyrate conversion reactions are inhibited in vitro by physiological levels of acetone and butanol. Functionally, catalyzes the transfer of CoA from acetoacetyl-CoA to acetate, butyrate and propionate. Also shows low activity with valerate, isobutyrate and crotonate. Plays an important role in the metabolic shift between the acid-producing and solvent-forming states of C.acetobutylicum. Acts mainly to detoxify the medium by removing the acetate and butyrate excreted earlier in the fermentation. This Clostridium acetobutylicum (strain ATCC 824 / DSM 792 / JCM 1419 / IAM 19013 / LMG 5710 / NBRC 13948 / NRRL B-527 / VKM B-1787 / 2291 / W) protein is Acetoacetyl-CoA:acetate/butyrate CoA transferase alpha subunit.